Reading from the N-terminus, the 247-residue chain is Carboxy-S-adenosyl-L-methionine synthase (247 aa).

Residues tyrosine 39, 64–66 (GCS), 89–90 (DN), 117–118 (DI), asparagine 132, and arginine 199 contribute to the S-adenosyl-L-methionine site.

The protein belongs to the class I-like SAM-binding methyltransferase superfamily. Cx-SAM synthase family. As to quaternary structure, homodimer.

The catalysed reaction is prephenate + S-adenosyl-L-methionine = carboxy-S-adenosyl-L-methionine + 3-phenylpyruvate + H2O. In terms of biological role, catalyzes the conversion of S-adenosyl-L-methionine (SAM) to carboxy-S-adenosyl-L-methionine (Cx-SAM). The sequence is that of Carboxy-S-adenosyl-L-methionine synthase from Shigella boydii serotype 4 (strain Sb227).